Reading from the N-terminus, the 284-residue chain is 4-hydroxybenzoate octaprenyltransferase (284 aa).

The next 9 membrane-spanning stretches (helical) occupy residues isoleucine 19–leucine 39, leucine 42–isoleucine 62, leucine 93–leucine 113, threonine 114–phenylalanine 134, histidine 136–alanine 156, alanine 158–alanine 178, isoleucine 210–alanine 230, threonine 233–isoleucine 253, and alanine 264–tryptophan 284.

This sequence belongs to the UbiA prenyltransferase family. Mg(2+) is required as a cofactor.

The protein localises to the cell inner membrane. The catalysed reaction is all-trans-octaprenyl diphosphate + 4-hydroxybenzoate = 4-hydroxy-3-(all-trans-octaprenyl)benzoate + diphosphate. Its pathway is cofactor biosynthesis; ubiquinone biosynthesis. Functionally, catalyzes the prenylation of para-hydroxybenzoate (PHB) with an all-trans polyprenyl group. Mediates the second step in the final reaction sequence of ubiquinone-8 (UQ-8) biosynthesis, which is the condensation of the polyisoprenoid side chain with PHB, generating the first membrane-bound Q intermediate 3-octaprenyl-4-hydroxybenzoate. This chain is 4-hydroxybenzoate octaprenyltransferase, found in Vibrio cholerae serotype O1 (strain ATCC 39541 / Classical Ogawa 395 / O395).